Consider the following 359-residue polypeptide: Fructose-like permease IIC component 2 (359 aa).

The region spanning 11–344 (TRQHLMTGVS…KSLARKNGSS (334 aa)) is the PTS EIIC type-2 domain. Transmembrane regions (helical) follow at residues 19–39 (VSHM…SVML), 60–80 (IGVA…GYSI), 99–119 (FGAG…VVHY), 135–155 (IFII…WGLG), 176–196 (SIVM…GGPV), 216–236 (VAIA…ATLI), 251–271 (AALV…AAAD), 290–310 (AALV…LPVV), and 314–334 (LGYI…VNVL).

It localises to the cell inner membrane. In terms of biological role, the phosphoenolpyruvate-dependent sugar phosphotransferase system (PTS), a major carbohydrate active -transport system, catalyzes the phosphorylation of incoming sugar substrates concomitant with their translocation across the cell membrane. In Escherichia coli (strain K12), this protein is Fructose-like permease IIC component 2 (frwC).